The sequence spans 257 residues: Protein windbeutel (257 aa).

The signal sequence occupies residues 1-21; that stretch reads MMHILVTLLLVAIHSIPTTWA. Residues 24-27 form a CXXC motif region; it reads CTGC. The short motif at 254-257 is the Prevents secretion from ER element; the sequence is KEEL.

As to quaternary structure, homodimer. Interacts with pip; the interaction is direct and does not require pip to be folded. Briefly expressed in the follicle cells of the ovary, at around the time when the dorsoventral axis of the egg chamber is first established.

Its subcellular location is the endoplasmic reticulum lumen. Probable chaperone protein involved in dorsoventral axis patterning in early embryos. Probably acts by folding and targeting pipe (pip) into the Golgi. In Drosophila melanogaster (Fruit fly), this protein is Protein windbeutel.